The primary structure comprises 441 residues: Amino-acid acetyltransferase (441 aa).

The 140-residue stretch at 295-434 (EQVRRATIND…QALYNYQRRS (140 aa)) folds into the N-acetyltransferase domain.

Belongs to the acetyltransferase family. ArgA subfamily. In terms of assembly, homohexamer.

It is found in the cytoplasm. It catalyses the reaction L-glutamate + acetyl-CoA = N-acetyl-L-glutamate + CoA + H(+). Its pathway is amino-acid biosynthesis; L-arginine biosynthesis; N(2)-acetyl-L-ornithine from L-glutamate: step 1/4. This is Amino-acid acetyltransferase from Serratia proteamaculans (strain 568).